We begin with the raw amino-acid sequence, 189 residues long: dCTP deaminase (189 aa).

Residues 112-117 (KSTYAR), 136-138 (TLE), Gln-157, Tyr-171, and Gln-181 each bind dCTP. The Proton donor/acceptor role is filled by Glu-138.

It belongs to the dCTP deaminase family. In terms of assembly, homotrimer.

It carries out the reaction dCTP + H2O + H(+) = dUTP + NH4(+). The protein operates within pyrimidine metabolism; dUMP biosynthesis; dUMP from dCTP (dUTP route): step 1/2. Catalyzes the deamination of dCTP to dUTP. This chain is dCTP deaminase, found in Xanthomonas euvesicatoria pv. vesicatoria (strain 85-10) (Xanthomonas campestris pv. vesicatoria).